We begin with the raw amino-acid sequence, 372 residues long: Alpha-L-fucosidase 3 (372 aa).

The signal sequence occupies residues Met-1–Ala-23. Ser-37 acts as the Nucleophile in catalysis. N-linked (GlcNAc...) asparagine glycans are attached at residues Asn-96, Asn-114, Asn-139, and Asn-182. Catalysis depends on residues Asp-345 and His-348.

It belongs to the 'GDSL' lipolytic enzyme family. High expression in younger leaves and in the apical region of the inflorescence stem.

The protein resides in the secreted. It localises to the extracellular space. The protein localises to the apoplast. It catalyses the reaction an alpha-L-fucoside + H2O = L-fucose + an alcohol. Its function is as follows. Hydrolyzes alpha-1,2-linked fucose. Also active on fucosylated xyloglucan oligosaccharides. The protein is Alpha-L-fucosidase 3 (FXG1) of Arabidopsis thaliana (Mouse-ear cress).